Reading from the N-terminus, the 410-residue chain is Chlorobenzene dioxygenase, ferredoxin reductase component (410 aa).

4-35 (HVAIIGNGVAGFTTAQALRAEGFEGRISLIGN) contacts FAD. 145–173 (RLVIAGGGLIGCEVATTARKLGLAVTILE) is a binding site for NAD(+).

The protein belongs to the bacterial ring-hydroxylating dioxygenase ferredoxin reductase family. This dioxygenase system consists of four proteins: the two subunits of the oxygenase component (TecA1 and TecA2), a ferredoxin (TecA3) and a ferredoxin reductase (TecA4). Requires FAD as cofactor.

It catalyses the reaction 2 reduced [2Fe-2S]-[ferredoxin] + NAD(+) + H(+) = 2 oxidized [2Fe-2S]-[ferredoxin] + NADH. Its pathway is aromatic compound metabolism. Its function is as follows. Part of the chlorobenzene dioxygenase system that catalyzes the dihydroxylation of a range of aromatic compounds, including chlorinated benzenes and toluenes, and dinuclear aromatics such as biphenyl and dibenzo-p-dioxin. This Cupriavidus sp. (strain PS12) protein is Chlorobenzene dioxygenase, ferredoxin reductase component.